The sequence spans 85 residues: Sec-independent protein translocase protein TatA (85 aa).

The chain crosses the membrane as a helical span at residues 1–21 (MGIFDWKHWLIILIVVVLVFG). The disordered stretch occupies residues 43–85 (VNTEEGENRPAEPQTGTSAGDTLNKTQTIEGQAQKVDTPVRKD). Residues 56-73 (QTGTSAGDTLNKTQTIEG) show a composition bias toward polar residues.

The protein belongs to the TatA/E family. As to quaternary structure, the Tat system comprises two distinct complexes: a TatABC complex, containing multiple copies of TatA, TatB and TatC subunits, and a separate TatA complex, containing only TatA subunits. Substrates initially bind to the TatABC complex, which probably triggers association of the separate TatA complex to form the active translocon.

Its subcellular location is the cell inner membrane. Its function is as follows. Part of the twin-arginine translocation (Tat) system that transports large folded proteins containing a characteristic twin-arginine motif in their signal peptide across membranes. TatA could form the protein-conducting channel of the Tat system. In Azotobacter vinelandii (strain DJ / ATCC BAA-1303), this protein is Sec-independent protein translocase protein TatA.